The chain runs to 335 residues: Mycobacterial beta-ketoacyl-[acyl-carrier-protein] synthase III (335 aa).

Catalysis depends on residues Cys-122 and His-258. The interval 259–263 (QANSR) is ACP-binding. Asn-289 is an active-site residue.

It belongs to the thiolase-like superfamily. FabH family. Homodimer.

It is found in the cytoplasm. It catalyses the reaction malonyl-[ACP] + dodecanoyl-CoA + H(+) = 3-oxotetradecanoyl-[ACP] + CO2 + CoA. It functions in the pathway lipid metabolism; fatty acid biosynthesis. The protein operates within lipid metabolism; mycolic acid biosynthesis. Its function is as follows. Catalyzes the condensation reaction of fatty acid synthesis by the addition to an acyl acceptor of two carbons from malonyl-ACP. Catalyzes the first condensation reaction which initiates fatty acid synthesis and may therefore play a role in governing the total rate of fatty acid production. Possesses both acetoacetyl-ACP synthase and acetyl transacylase activities. Its substrate specificity determines the biosynthesis of branched-chain and/or straight-chain of fatty acids. This chain is Mycobacterial beta-ketoacyl-[acyl-carrier-protein] synthase III, found in Mycobacterium bovis (strain ATCC BAA-935 / AF2122/97).